The following is a 206-amino-acid chain: Large ribosomal subunit protein uL22m (206 aa).

The N-terminal 40 residues, 1–40 (MAAALLRELGALWVPNLRIWTTQMLRVLPQSCIHTSTSLD), are a transit peptide targeting the mitochondrion.

Belongs to the universal ribosomal protein uL22 family. As to quaternary structure, component of the mitochondrial ribosome large subunit (39S) which comprises a 16S rRNA and about 50 distinct proteins.

It is found in the mitochondrion. The sequence is that of Large ribosomal subunit protein uL22m (Mrpl22) from Rattus norvegicus (Rat).